Here is a 538-residue protein sequence, read N- to C-terminus: Bifunctional purine biosynthesis protein PurH (538 aa).

The MGS-like domain maps to 8–158; the sequence is IPAPDKVEIK…KNHAYVTILT (151 aa).

The protein belongs to the PurH family.

It carries out the reaction (6R)-10-formyltetrahydrofolate + 5-amino-1-(5-phospho-beta-D-ribosyl)imidazole-4-carboxamide = 5-formamido-1-(5-phospho-D-ribosyl)imidazole-4-carboxamide + (6S)-5,6,7,8-tetrahydrofolate. It catalyses the reaction IMP + H2O = 5-formamido-1-(5-phospho-D-ribosyl)imidazole-4-carboxamide. It functions in the pathway purine metabolism; IMP biosynthesis via de novo pathway; 5-formamido-1-(5-phospho-D-ribosyl)imidazole-4-carboxamide from 5-amino-1-(5-phospho-D-ribosyl)imidazole-4-carboxamide (10-formyl THF route): step 1/1. Its pathway is purine metabolism; IMP biosynthesis via de novo pathway; IMP from 5-formamido-1-(5-phospho-D-ribosyl)imidazole-4-carboxamide: step 1/1. The chain is Bifunctional purine biosynthesis protein PurH from Rhizobium etli (strain ATCC 51251 / DSM 11541 / JCM 21823 / NBRC 15573 / CFN 42).